A 1409-amino-acid chain; its full sequence is DNA-directed RNA polymerase subunit beta' (1409 aa).

Zn(2+)-binding residues include cysteine 70, cysteine 72, cysteine 85, and cysteine 88. Residues aspartate 460, aspartate 462, and aspartate 464 each coordinate Mg(2+). Residues cysteine 822, cysteine 896, cysteine 903, and cysteine 906 each contribute to the Zn(2+) site.

It belongs to the RNA polymerase beta' chain family. As to quaternary structure, the RNAP catalytic core consists of 2 alpha, 1 beta, 1 beta' and 1 omega subunit. When a sigma factor is associated with the core the holoenzyme is formed, which can initiate transcription. Requires Mg(2+) as cofactor. Zn(2+) is required as a cofactor.

The catalysed reaction is RNA(n) + a ribonucleoside 5'-triphosphate = RNA(n+1) + diphosphate. Functionally, DNA-dependent RNA polymerase catalyzes the transcription of DNA into RNA using the four ribonucleoside triphosphates as substrates. This Methylobacillus flagellatus (strain ATCC 51484 / DSM 6875 / VKM B-1610 / KT) protein is DNA-directed RNA polymerase subunit beta'.